Consider the following 234-residue polypeptide: Ribosomal RNA small subunit methyltransferase G (234 aa).

Residues Gly-74, Phe-79, 125-126, and Arg-144 contribute to the S-adenosyl-L-methionine site; that span reads AE.

This sequence belongs to the methyltransferase superfamily. RNA methyltransferase RsmG family.

It is found in the cytoplasm. Its function is as follows. Specifically methylates the N7 position of a guanine in 16S rRNA. This Roseiflexus castenholzii (strain DSM 13941 / HLO8) protein is Ribosomal RNA small subunit methyltransferase G.